Reading from the N-terminus, the 377-residue chain is Chaperone protein DnaJ (377 aa).

A J domain is found at 5-70 (DYYQVLGVAK…QKRAAYDQYG (66 aa)). The CR-type zinc-finger motif lies at 137 to 215 (GYDTQIRVPS…CHGAGKTKET (79 aa)). The Zn(2+) site is built by Cys-150, Cys-153, Cys-167, Cys-170, Cys-189, Cys-192, Cys-203, and Cys-206. 4 CXXCXGXG motif repeats span residues 150 to 157 (CEICHGSG), 167 to 174 (CPTCNGSG), 189 to 196 (CPKCHGTG), and 203 to 210 (CTHCHGAG).

This sequence belongs to the DnaJ family. As to quaternary structure, homodimer. Requires Zn(2+) as cofactor.

It is found in the cytoplasm. Its function is as follows. Participates actively in the response to hyperosmotic and heat shock by preventing the aggregation of stress-denatured proteins and by disaggregating proteins, also in an autonomous, DnaK-independent fashion. Unfolded proteins bind initially to DnaJ; upon interaction with the DnaJ-bound protein, DnaK hydrolyzes its bound ATP, resulting in the formation of a stable complex. GrpE releases ADP from DnaK; ATP binding to DnaK triggers the release of the substrate protein, thus completing the reaction cycle. Several rounds of ATP-dependent interactions between DnaJ, DnaK and GrpE are required for fully efficient folding. Also involved, together with DnaK and GrpE, in the DNA replication of plasmids through activation of initiation proteins. The polypeptide is Chaperone protein DnaJ (Paraburkholderia phymatum (strain DSM 17167 / CIP 108236 / LMG 21445 / STM815) (Burkholderia phymatum)).